Reading from the N-terminus, the 325-residue chain is Replication factor C small subunit (325 aa).

Residue 45-52 (GPPGTGKT) participates in ATP binding.

Belongs to the activator 1 small subunits family. RfcS subfamily. Heteromultimer composed of small subunits (RfcS) and large subunits (RfcL).

Functionally, part of the RFC clamp loader complex which loads the PCNA sliding clamp onto DNA. This chain is Replication factor C small subunit, found in Sulfolobus acidocaldarius (strain ATCC 33909 / DSM 639 / JCM 8929 / NBRC 15157 / NCIMB 11770).